The primary structure comprises 397 residues: Lymphoid enhancer-binding factor 1 (397 aa).

Positions 1 to 60 (MPQLSGGGGGGDPELCATDEMIPFKDEGDPQKEKIFAEISHPEEEGDLADIKSSLVNESE) are CTNNB1-binding. Residue Lys-25 forms a Glycyl lysine isopeptide (Lys-Gly) (interchain with G-Cter in SUMO) linkage. The disordered stretch occupies residues 59–102 (SEIIPASNGHEVVRQAPSSQEPYHDKAREHPDEGKHPDGGLYNK). Residues 80-96 (PYHDKAREHPDEGKHPD) show a composition bias toward basic and acidic residues. Ser-130 carries the post-translational modification Phosphoserine. Thr-153 carries the phosphothreonine; by NLK modification. Position 164 is a phosphoserine; by NLK (Ser-164). Disordered stretches follow at residues 164 to 191 (SPGS…APEI) and 266 to 296 (VKQE…KRPH). Residue Lys-267 forms a Glycyl lysine isopeptide (Lys-Gly) (interchain with G-Cter in SUMO) linkage. Over residues 267–294 (KQEHPHTDSDLMHVKPQHEQRKEQEPKR) the composition is skewed to basic and acidic residues. The segment at residues 297–365 (IKKPLNAFML…LHMQLYPGWS (69 aa)) is a DNA-binding region (HMG box). The interval 367–397 (RDNYGKKKKRKREKLQESTSGTGPRMTAAYI) is disordered.

This sequence belongs to the TCF/LEF family. As to quaternary structure, binds the armadillo repeat of CTNNB1 and forms a stable complex. Binds TLE1, ALYREF/THOC4, MDFI and MDFIC. Interacts with NLK. Interacts with EP300 and PIASG. Interacts with DAZAP2. Phosphorylated at Thr-153 and/or Ser-164 by NLK. Phosphorylation by NLK at these sites represses LEF1-mediated transcriptional activation of target genes of the canonical Wnt signaling pathway. As to expression, expressed in Vgamma1.1 and Vgamma2 gamma-delta T-cells, however not expressed in gamma-delta thymocytes fated for Il17a expression (at protein level). Expressed in alpha-beta T-cell lineages. Expressed in the thymus. Found in distinct epithelial cell compartments of the skin and is abundant in the hair-producing progenitors of the follicle.

It is found in the nucleus. Functionally, transcription factor that binds DNA in a sequence-specific manner. Participates in the Wnt signaling pathway. Activates transcription of target genes in the presence of CTNNB1 and EP300. PIASG antagonizes both Wnt-dependent and Wnt-independent activation by LEF1. TLE1, TLE2, TLE3 and TLE4 repress transactivation mediated by LEF1 and CTNNB1. Regulates T-cell receptor alpha enhancer function. Required for IL17A expressing gamma-delta T-cell maturation and development, via binding to regulator loci of BLK to modulate expression. Acts as a positive regulator of odontoblast differentiation during mesenchymal tooth germ formation, expression is repressed during the bell stage by MSX1-mediated inhibition of CTNNB1 signaling. May play a role in hair cell differentiation and follicle morphogenesis. The chain is Lymphoid enhancer-binding factor 1 from Mus musculus (Mouse).